Reading from the N-terminus, the 31-residue chain is Photosystem II reaction center protein T (31 aa).

A helical membrane pass occupies residues 3–23 (ALVYVFLLTGTLMVIFFAIFF).

It belongs to the PsbT family. In terms of assembly, PSII is composed of 1 copy each of membrane proteins PsbA, PsbB, PsbC, PsbD, PsbE, PsbF, PsbH, PsbI, PsbJ, PsbK, PsbL, PsbM, PsbT, PsbX, PsbY, PsbZ, Psb30/Ycf12, at least 3 peripheral proteins of the oxygen-evolving complex and a large number of cofactors. It forms dimeric complexes.

The protein resides in the plastid. Its subcellular location is the chloroplast thylakoid membrane. Functionally, found at the monomer-monomer interface of the photosystem II (PS II) dimer, plays a role in assembly and dimerization of PSII. PSII is a light-driven water plastoquinone oxidoreductase, using light energy to abstract electrons from H(2)O, generating a proton gradient subsequently used for ATP formation. This chain is Photosystem II reaction center protein T, found in Pyropia yezoensis (Susabi-nori).